The primary structure comprises 126 residues: Glycine cleavage system H protein (126 aa).

Residues Thr-23 to Lys-104 form the Lipoyl-binding domain. At Lys-64 the chain carries N6-lipoyllysine.

This sequence belongs to the GcvH family. The glycine cleavage system is composed of four proteins: P, T, L and H. (R)-lipoate serves as cofactor.

In terms of biological role, the glycine cleavage system catalyzes the degradation of glycine. The H protein shuttles the methylamine group of glycine from the P protein to the T protein. This is Glycine cleavage system H protein from Paraburkholderia xenovorans (strain LB400).